A 440-amino-acid chain; its full sequence is tRNA(Ile)-lysidine synthase (440 aa).

Residue 29–34 (SGGLDS) coordinates ATP.

The protein belongs to the tRNA(Ile)-lysidine synthase family.

It is found in the cytoplasm. It carries out the reaction cytidine(34) in tRNA(Ile2) + L-lysine + ATP = lysidine(34) in tRNA(Ile2) + AMP + diphosphate + H(+). Its function is as follows. Ligates lysine onto the cytidine present at position 34 of the AUA codon-specific tRNA(Ile) that contains the anticodon CAU, in an ATP-dependent manner. Cytidine is converted to lysidine, thus changing the amino acid specificity of the tRNA from methionine to isoleucine. This is tRNA(Ile)-lysidine synthase from Pectobacterium atrosepticum (strain SCRI 1043 / ATCC BAA-672) (Erwinia carotovora subsp. atroseptica).